Here is a 1341-residue protein sequence, read N- to C-terminus: DNA-directed RNA polymerase subunit beta (1341 aa).

Belongs to the RNA polymerase beta chain family. The RNAP catalytic core consists of 2 alpha, 1 beta, 1 beta' and 1 omega subunit. When a sigma factor is associated with the core the holoenzyme is formed, which can initiate transcription.

It catalyses the reaction RNA(n) + a ribonucleoside 5'-triphosphate = RNA(n+1) + diphosphate. DNA-dependent RNA polymerase catalyzes the transcription of DNA into RNA using the four ribonucleoside triphosphates as substrates. In Vibrio cholerae serotype O1 (strain ATCC 39315 / El Tor Inaba N16961), this protein is DNA-directed RNA polymerase subunit beta.